A 337-amino-acid chain; its full sequence is Quercetin 2,3-dioxygenase (337 aa).

Cupin type-2 domains lie at 55–110 (KGDA…MQSH) and 226–281 (PKGD…RLDS). The Fe cation site is built by His62, His64, Glu69, His103, His234, His236, Glu241, and His275.

In terms of assembly, homodimer. It depends on Fe(2+) as a cofactor.

The catalysed reaction is quercetin + O2 = 2-(3,4-dihydroxybenzoyloxy)-4,6-dihydroxybenzoate + CO. It participates in flavonoid metabolism; quercetin degradation. Performs the first step in the degradation of the flavonoid quercetin by a dioxygenase reaction. The enzyme catalyzes the cleavage of the O-heteroaromatic ring of the flavonol quercetin yielding the depside 2-protocatechuoyl-phloroglucinol carboxylic acid and carbon monoxide. This involves the remarkable dioxygenolytic cleavage of two carbon-carbon bonds. The chain is Quercetin 2,3-dioxygenase (qdoI) from Bacillus subtilis (strain 168).